The following is a 213-amino-acid chain: MNFTRIDLNTWNRREHFALYRQQIKCGFSLTTKLDITAFRTALAETDYKFYPVMIYLISRVVNQFPEFRMAMKDNALIYWDQTDPVFTVFHKETETFSALFCRYCPDISEFMAGYNAVMAEYQHNTALFPQGALPENHLNISSLPWVSFDGFNLNITGNDDYFAPVFTMAKFQQEDNRVLLPVSVQVHHAVCDGFHAARFINTLQMMCDNILK.

H189 serves as the catalytic Proton acceptor.

Belongs to the chloramphenicol acetyltransferase family. Homotrimer.

It carries out the reaction chloramphenicol + acetyl-CoA = chloramphenicol 3-acetate + CoA. Functionally, this enzyme is an effector of chloramphenicol resistance in bacteria. The polypeptide is Chloramphenicol acetyltransferase 2 (cat-IIH) (Haemophilus influenzae).